The following is a 397-amino-acid chain: Tryptophan synthase beta chain (397 aa).

Lysine 86 is subject to N6-(pyridoxal phosphate)lysine.

Belongs to the TrpB family. In terms of assembly, tetramer of two alpha and two beta chains. The cofactor is pyridoxal 5'-phosphate.

It catalyses the reaction (1S,2R)-1-C-(indol-3-yl)glycerol 3-phosphate + L-serine = D-glyceraldehyde 3-phosphate + L-tryptophan + H2O. It participates in amino-acid biosynthesis; L-tryptophan biosynthesis; L-tryptophan from chorismate: step 5/5. In terms of biological role, the beta subunit is responsible for the synthesis of L-tryptophan from indole and L-serine. The protein is Tryptophan synthase beta chain of Aeromonas salmonicida (strain A449).